The sequence spans 389 residues: Sulfate adenylyltransferase (389 aa).

The protein belongs to the sulfate adenylyltransferase family.

The enzyme catalyses sulfate + ATP + H(+) = adenosine 5'-phosphosulfate + diphosphate. Its pathway is sulfur metabolism; hydrogen sulfide biosynthesis; sulfite from sulfate: step 1/3. This is Sulfate adenylyltransferase from Deinococcus geothermalis (strain DSM 11300 / CIP 105573 / AG-3a).